A 109-amino-acid polypeptide reads, in one-letter code: Nucleoid-associated protein LJ_0424 (109 aa).

This sequence belongs to the YbaB/EbfC family. Homodimer.

The protein localises to the cytoplasm. It is found in the nucleoid. In terms of biological role, binds to DNA and alters its conformation. May be involved in regulation of gene expression, nucleoid organization and DNA protection. The protein is Nucleoid-associated protein LJ_0424 of Lactobacillus johnsonii (strain CNCM I-12250 / La1 / NCC 533).